The primary structure comprises 87 residues: Candoxin (87 aa).

The first 21 residues, Met-1–Thr-21, serve as a signal peptide directing secretion. 5 disulfide bridges follow: Cys-24–Cys-47, Cys-27–Cys-32, Cys-40–Cys-64, Cys-68–Cys-80, and Cys-81–Cys-86.

In terms of tissue distribution, expressed by the venom gland.

It is found in the secreted. Its function is as follows. Binds and inhibits muscular and neuronal nicotinic acetylcholine receptors (nAChR). Is a reversible antagonist of muscle nAChR (alpha-1-beta-1-delta-epsilon/CHRNA1-CHRNB1-CHRND-CHRNE) (IC(50)=10 nM) and a potent and poorly reversible antagonist of the neuronal alpha-7/CHRNA7 nAChR (IC(50)=50 nM). May exhibit differential affinities for the two binding sites on the muscle nAChR. The protein is Candoxin of Bungarus candidus (Malayan krait).